The primary structure comprises 232 residues: Orotidine 5'-phosphate decarboxylase (232 aa).

Substrate contacts are provided by residues D13, K35, 62 to 71 (DLKFHDIPNT), T122, R182, Q191, G211, and R212. Catalysis depends on K64, which acts as the Proton donor.

This sequence belongs to the OMP decarboxylase family. Type 1 subfamily. In terms of assembly, homodimer.

The catalysed reaction is orotidine 5'-phosphate + H(+) = UMP + CO2. It functions in the pathway pyrimidine metabolism; UMP biosynthesis via de novo pathway; UMP from orotate: step 2/2. Its function is as follows. Catalyzes the decarboxylation of orotidine 5'-monophosphate (OMP) to uridine 5'-monophosphate (UMP). In Pseudomonas paraeruginosa (strain DSM 24068 / PA7) (Pseudomonas aeruginosa (strain PA7)), this protein is Orotidine 5'-phosphate decarboxylase.